We begin with the raw amino-acid sequence, 375 residues long: Non-structural protein NS5 (375 aa).

The polypeptide is Non-structural protein NS5 (NS-5) (Rottboellia (Sorghum)).